Consider the following 247-residue polypeptide: Ice-binding protein (247 aa).

The first 19 residues, 1–19, serve as a signal peptide directing secretion; sequence MTFSILSIFVFGLISSSVA. Asn-219 carries N-linked (GlcNAc...) asparagine glycosylation.

The protein belongs to the ice-binding protein family.

It is found in the secreted. Binds ice crystals and most probably inhibits their growth in order to prevent cell damage from extracellular ice. The chain is Ice-binding protein from Flammulina populicola (Enokitake mushroom).